The sequence spans 146 residues: Snaclec 1 (146 aa).

A signal peptide spans 1-23 (MGRFIFMSFGLLVVFLSLSGTGA). Disulfide bonds link C25–C36, C53–C142, and C119–C134. In terms of domain architecture, C-type lectin spans 32–143 (YEGHCYRVFQ…CSRTYSFVCK (112 aa)).

Belongs to the snaclec family. In terms of assembly, heterodimer; disulfide-linked. In terms of tissue distribution, expressed by the venom gland.

It localises to the secreted. Its function is as follows. Interferes with one step of hemostasis (modulation of platelet aggregation, or coagulation cascade, for example). This is Snaclec 1 from Sistrurus catenatus edwardsii (Desert massasauga).